Here is a 446-residue protein sequence, read N- to C-terminus: 3-phosphoshikimate 1-carboxyvinyltransferase (446 aa).

The 3-phosphoshikimate site is built by Lys-30, Ser-31, and Arg-35. Residue Lys-30 participates in phosphoenolpyruvate binding. The phosphoenolpyruvate site is built by Gly-112 and Arg-140. 3-phosphoshikimate contacts are provided by Ser-186, Ser-187, Gln-188, Ser-215, Glu-334, and His-361. Gln-188 is a binding site for phosphoenolpyruvate. The Proton acceptor role is filled by Glu-334. Arg-365, Arg-406, and Lys-431 together coordinate phosphoenolpyruvate.

It belongs to the EPSP synthase family. As to quaternary structure, monomer.

It is found in the cytoplasm. The enzyme catalyses 3-phosphoshikimate + phosphoenolpyruvate = 5-O-(1-carboxyvinyl)-3-phosphoshikimate + phosphate. The protein operates within metabolic intermediate biosynthesis; chorismate biosynthesis; chorismate from D-erythrose 4-phosphate and phosphoenolpyruvate: step 6/7. Functionally, catalyzes the transfer of the enolpyruvyl moiety of phosphoenolpyruvate (PEP) to the 5-hydroxyl of shikimate-3-phosphate (S3P) to produce enolpyruvyl shikimate-3-phosphate and inorganic phosphate. This is 3-phosphoshikimate 1-carboxyvinyltransferase from Streptomyces avermitilis (strain ATCC 31267 / DSM 46492 / JCM 5070 / NBRC 14893 / NCIMB 12804 / NRRL 8165 / MA-4680).